A 291-amino-acid polypeptide reads, in one-letter code: Sulfate transport system permease protein CysW (291 aa).

Over 1–22 the chain is Cytoplasmic; that stretch reads MAEVTQLKRYDARPINWGKWFL. A helical membrane pass occupies residues 23–43; that stretch reads IGIGMLVSAFILLVPMIYIFV. Residues 44–69 lie on the Periplasmic side of the membrane; sequence QAFSKGLMPVLQNLADPDMLHAIWLT. The ABC transmembrane type-1 domain occupies 66–270; that stretch reads IWLTVMIALI…MAIITLFLKS (205 aa). The helical transmembrane segment at 70 to 90 threads the bilayer; sequence VMIALIAVPVNLVFGILLAWL. At 91–104 the chain is on the cytoplasmic side; that stretch reads VTRFNFPGRQLLLT. Residues 105–125 traverse the membrane as a helical segment; it reads LLDIPFAVSPVVAGLVYLLFY. At 126–141 the chain is on the periplasmic side; that stretch reads GSNGPLGGWLDEHNLQ. The helical transmembrane segment at 142–162 threads the bilayer; that stretch reads IMFSWPGMVLVTIFVTCPFVV. Over 163–200 the chain is Cytoplasmic; sequence RELVPVMLSQGSQEDEAAILLGASGWQMFRRVTLPNIR. A helical membrane pass occupies residues 201-221; it reads WALLYGVVLTNARAIGEFGAV. Topologically, residues 222–247 are periplasmic; it reads SVVSGSIRGETLSLPLQIELLEQDYN. The chain crosses the membrane as a helical span at residues 248–268; sequence TVGSFTAAALLTLMAIITLFL. Residues 269-291 lie on the Cytoplasmic side of the membrane; sequence KSMLQWRLENQEKRAQQEEHHEH.

Belongs to the binding-protein-dependent transport system permease family. CysTW subfamily. In terms of assembly, the complex is composed of two ATP-binding proteins (CysA), two transmembrane proteins (CysT and CysW) and a solute-binding protein (CysP).

The protein resides in the cell inner membrane. Part of the ABC transporter complex CysAWTP (TC 3.A.1.6.1) involved in sulfate/thiosulfate import. Probably responsible for the translocation of the substrate across the membrane. This Escherichia coli O6:H1 (strain CFT073 / ATCC 700928 / UPEC) protein is Sulfate transport system permease protein CysW (cysW).